The primary structure comprises 168 residues: Chorismate pyruvate-lyase (168 aa).

Residues M36, R78, L116, and E157 each coordinate substrate.

This sequence belongs to the UbiC family. As to quaternary structure, monomer.

It localises to the cytoplasm. The enzyme catalyses chorismate = 4-hydroxybenzoate + pyruvate. It functions in the pathway cofactor biosynthesis; ubiquinone biosynthesis. Its function is as follows. Removes the pyruvyl group from chorismate, with concomitant aromatization of the ring, to provide 4-hydroxybenzoate (4HB) for the ubiquinone pathway. This chain is Chorismate pyruvate-lyase, found in Photorhabdus laumondii subsp. laumondii (strain DSM 15139 / CIP 105565 / TT01) (Photorhabdus luminescens subsp. laumondii).